A 93-amino-acid chain; its full sequence is DNA-binding protein HU 1 (93 aa).

The protein belongs to the bacterial histone-like protein family. Homodimer.

Its subcellular location is the cytoplasm. It is found in the nucleoid. Histone-like DNA-binding protein which is capable of wrapping DNA to stabilize it, and thus to prevent its denaturation under extreme environmental conditions. The protein is DNA-binding protein HU 1 (hup1) of Streptomyces coelicolor (strain ATCC BAA-471 / A3(2) / M145).